The sequence spans 533 residues: Phosphoenolpyruvate carboxykinase (ATP) (533 aa).

R59, Y199, and K205 together coordinate substrate. ATP contacts are provided by residues K205, H224, and 240–248 (GLSGTGKTT). Positions 205 and 224 each coordinate Mn(2+). D261 contacts Mn(2+). ATP contacts are provided by residues E289, R325, 441 to 442 (RI), and T447. Residue R325 coordinates substrate.

Belongs to the phosphoenolpyruvate carboxykinase (ATP) family. As to quaternary structure, monomer. The cofactor is Mn(2+).

The protein resides in the cytoplasm. The enzyme catalyses oxaloacetate + ATP = phosphoenolpyruvate + ADP + CO2. The protein operates within carbohydrate biosynthesis; gluconeogenesis. Its function is as follows. Involved in the gluconeogenesis. Catalyzes the conversion of oxaloacetate (OAA) to phosphoenolpyruvate (PEP) through direct phosphoryl transfer between the nucleoside triphosphate and OAA. The sequence is that of Phosphoenolpyruvate carboxykinase (ATP) from Idiomarina loihiensis (strain ATCC BAA-735 / DSM 15497 / L2-TR).